A 257-amino-acid chain; its full sequence is Transmembrane protein C257L (257 aa).

Transmembrane regions (helical) follow at residues 123–143 and 163–183; these read LELLGYSPTPIIGGDFMFTAL and MMIFFLIILLCVILGIFYVLV.

It belongs to the asfivirus C257R family.

Its subcellular location is the host membrane. The protein resides in the virion. The protein is Transmembrane protein C257L of African swine fever virus (strain Badajoz 1971 Vero-adapted) (Ba71V).